The primary structure comprises 307 residues: Porphobilinogen deaminase (307 aa).

Cys239 bears the S-(dipyrrolylmethanemethyl)cysteine mark.

Belongs to the HMBS family. In terms of assembly, monomer. Dipyrromethane serves as cofactor.

The enzyme catalyses 4 porphobilinogen + H2O = hydroxymethylbilane + 4 NH4(+). The protein operates within porphyrin-containing compound metabolism; protoporphyrin-IX biosynthesis; coproporphyrinogen-III from 5-aminolevulinate: step 2/4. Its function is as follows. Tetrapolymerization of the monopyrrole PBG into the hydroxymethylbilane pre-uroporphyrinogen in several discrete steps. The chain is Porphobilinogen deaminase from Campylobacter jejuni subsp. doylei (strain ATCC BAA-1458 / RM4099 / 269.97).